The sequence spans 438 residues: Thymidine phosphorylase (438 aa).

It belongs to the thymidine/pyrimidine-nucleoside phosphorylase family. As to quaternary structure, homodimer.

It catalyses the reaction thymidine + phosphate = 2-deoxy-alpha-D-ribose 1-phosphate + thymine. It participates in pyrimidine metabolism; dTMP biosynthesis via salvage pathway; dTMP from thymine: step 1/2. In terms of biological role, the enzymes which catalyze the reversible phosphorolysis of pyrimidine nucleosides are involved in the degradation of these compounds and in their utilization as carbon and energy sources, or in the rescue of pyrimidine bases for nucleotide synthesis. The polypeptide is Thymidine phosphorylase (Sinorhizobium fredii (strain NBRC 101917 / NGR234)).